A 504-amino-acid polypeptide reads, in one-letter code: ATP synthase subunit alpha (504 aa).

Gly170–Thr177 serves as a coordination point for ATP.

This sequence belongs to the ATPase alpha/beta chains family. In terms of assembly, F-type ATPases have 2 components, CF(1) - the catalytic core - and CF(0) - the membrane proton channel. CF(1) has five subunits: alpha(3), beta(3), gamma(1), delta(1), epsilon(1). CF(0) has four main subunits: a(1), b(1), b'(1) and c(9-12).

The protein localises to the cellular thylakoid membrane. The enzyme catalyses ATP + H2O + 4 H(+)(in) = ADP + phosphate + 5 H(+)(out). Produces ATP from ADP in the presence of a proton gradient across the membrane. The alpha chain is a regulatory subunit. This chain is ATP synthase subunit alpha, found in Prochlorococcus marinus (strain NATL2A).